The chain runs to 316 residues: 4-hydroxy-3-methylbut-2-enyl diphosphate reductase (316 aa).

Residue Cys12 participates in [4Fe-4S] cluster binding. Residues His41 and His74 each coordinate (2E)-4-hydroxy-3-methylbut-2-enyl diphosphate. Positions 41 and 74 each coordinate dimethylallyl diphosphate. His41 and His74 together coordinate isopentenyl diphosphate. Cys96 is a binding site for [4Fe-4S] cluster. His124 is a (2E)-4-hydroxy-3-methylbut-2-enyl diphosphate binding site. His124 lines the dimethylallyl diphosphate pocket. His124 serves as a coordination point for isopentenyl diphosphate. The active-site Proton donor is the Glu126. Thr169 contacts (2E)-4-hydroxy-3-methylbut-2-enyl diphosphate. Cys199 contributes to the [4Fe-4S] cluster binding site. Residues Ser227, Ser228, Asn229, and Ser271 each coordinate (2E)-4-hydroxy-3-methylbut-2-enyl diphosphate. Positions 227, 228, 229, and 271 each coordinate dimethylallyl diphosphate. Ser227, Ser228, Asn229, and Ser271 together coordinate isopentenyl diphosphate.

It belongs to the IspH family. [4Fe-4S] cluster serves as cofactor.

The catalysed reaction is isopentenyl diphosphate + 2 oxidized [2Fe-2S]-[ferredoxin] + H2O = (2E)-4-hydroxy-3-methylbut-2-enyl diphosphate + 2 reduced [2Fe-2S]-[ferredoxin] + 2 H(+). It catalyses the reaction dimethylallyl diphosphate + 2 oxidized [2Fe-2S]-[ferredoxin] + H2O = (2E)-4-hydroxy-3-methylbut-2-enyl diphosphate + 2 reduced [2Fe-2S]-[ferredoxin] + 2 H(+). The protein operates within isoprenoid biosynthesis; dimethylallyl diphosphate biosynthesis; dimethylallyl diphosphate from (2E)-4-hydroxy-3-methylbutenyl diphosphate: step 1/1. It functions in the pathway isoprenoid biosynthesis; isopentenyl diphosphate biosynthesis via DXP pathway; isopentenyl diphosphate from 1-deoxy-D-xylulose 5-phosphate: step 6/6. In terms of biological role, catalyzes the conversion of 1-hydroxy-2-methyl-2-(E)-butenyl 4-diphosphate (HMBPP) into a mixture of isopentenyl diphosphate (IPP) and dimethylallyl diphosphate (DMAPP). Acts in the terminal step of the DOXP/MEP pathway for isoprenoid precursor biosynthesis. This chain is 4-hydroxy-3-methylbut-2-enyl diphosphate reductase, found in Vibrio vulnificus (strain CMCP6).